The sequence spans 493 residues: Probable glycine dehydrogenase (decarboxylating) subunit 2 (493 aa).

Residue K269 is modified to N6-(pyridoxal phosphate)lysine.

Belongs to the GcvP family. C-terminal subunit subfamily. In terms of assembly, the glycine cleavage system is composed of four proteins: P, T, L and H. In this organism, the P 'protein' is a heterodimer of two subunits. Pyridoxal 5'-phosphate serves as cofactor.

It catalyses the reaction N(6)-[(R)-lipoyl]-L-lysyl-[glycine-cleavage complex H protein] + glycine + H(+) = N(6)-[(R)-S(8)-aminomethyldihydrolipoyl]-L-lysyl-[glycine-cleavage complex H protein] + CO2. The glycine cleavage system catalyzes the degradation of glycine. The P protein binds the alpha-amino group of glycine through its pyridoxal phosphate cofactor; CO(2) is released and the remaining methylamine moiety is then transferred to the lipoamide cofactor of the H protein. The polypeptide is Probable glycine dehydrogenase (decarboxylating) subunit 2 (Chloroherpeton thalassium (strain ATCC 35110 / GB-78)).